The following is a 246-amino-acid chain: MSSLSAAYQNLAPRKDGAPAVILFSGGLDSTTVLALAKDLGYTPYALSVGYGQRHSSELAAAKHIAKQIGVARHEVVNLDLTRFGGSALTDSSIAVPTTPGKDQEIPVTYVPARNTILLSLALGWAESLGGLDVFYGANSVDYSGYPDCRPEYVASFETMANLATKAGVEAINNENRFRVHAPIISLTKAEIIQLGSTLGVDYSQTVSCYQANDLGEACGECESCRLRQIGFKQANVIDPTRYQKK.

24-34 provides a ligand contact to ATP; sequence FSGGLDSTTVL. Cys-209, Cys-219, Cys-222, and Cys-225 together coordinate Zn(2+).

It belongs to the QueC family. Requires Zn(2+) as cofactor.

It carries out the reaction 7-carboxy-7-deazaguanine + NH4(+) + ATP = 7-cyano-7-deazaguanine + ADP + phosphate + H2O + H(+). It participates in purine metabolism; 7-cyano-7-deazaguanine biosynthesis. Functionally, catalyzes the ATP-dependent conversion of 7-carboxy-7-deazaguanine (CDG) to 7-cyano-7-deazaguanine (preQ(0)). The sequence is that of 7-cyano-7-deazaguanine synthase from Polynucleobacter asymbioticus (strain DSM 18221 / CIP 109841 / QLW-P1DMWA-1) (Polynucleobacter necessarius subsp. asymbioticus).